The sequence spans 704 residues: Rabphilin-3A (704 aa).

The segment covering 1–12 (MTDTVFSSSSSR) has biased composition (polar residues). The disordered stretch occupies residues 1–52 (MTDTVFSSSSSRWMCPSDRPLQSNDKEQLQTGWSVHPSGQPDRQRKQEELTD). A RabBD domain is found at 44-161 (QRKQEELTDE…KRSGAWFFKG (118 aa)). An FYVE-type zinc finger spans residues 92-149 (GDGVNRCILCGEQLGMLGSACVVCEDCKKNVCTKCGVETSNNRPHPVWLCKICIEQRE). Positions 98, 101, 115, 118, 123, 126, 141, and 144 each coordinate Zn(2+). The tract at residues 167-398 (LPQPMPIKKN…EEEANSYDSD (232 aa)) is disordered. The segment covering 205–214 (TRGDTEDRRG) has biased composition (basic and acidic residues). Omega-N-methylarginine is present on arginine 229. A Phosphoserine modification is found at serine 277. Residues 279-290 (QASRPAPASMQS) show a composition bias toward low complexity. Positions 291-310 (PAPPQPGQPGPPGGSRPSPG) are enriched in pro residues. Over residues 366–380 (QASAAAPQPVVASAR) the composition is skewed to low complexity. Acidic residues predominate over residues 385–398 (PEEDEEEANSYDSD). Residues 402-524 (TLGALEFSLL…KPNQRKNFNI (123 aa)) form the C2 1 domain. Ca(2+) is bound by residues methionine 432, aspartate 433, aspartate 439, aspartate 494, glutamate 495, aspartate 496, glutamate 502, glutamate 549, aspartate 591, aspartate 597, aspartate 651, tyrosine 652, aspartate 653, and aspartate 659. The region spanning 560–693 (ERGKILVSLM…NKDKKIERWH (134 aa)) is the C2 2 domain. Serine 702 and serine 703 each carry phosphoserine.

Interacts with RAB3B, RAB3C, RAB3D, RAB8A, RAB27A and RAB27B. Interacts with RAB3A; this interaction recruits RPH3A to synaptic vesicules. Interacts (via C2B domain) with SNAP25. Interacts with deubiquitinating enzyme CAND1; this interaction results in the deubiquitination of RPH3A. Interacts with GRIN2A and DLG4; this ternary complex regulates NMDA receptor composition at postsynaptic membranes. Interacts with SNCA. The cofactor is Ca(2+). In terms of processing, ubiquitinated. Deubiquitinated by CAND1 to prevent its degradation. Specifically expressed in brain.

The protein localises to the cytoplasmic vesicle. It localises to the secretory vesicle. It is found in the synaptic vesicle membrane. Its subcellular location is the cell projection. The protein resides in the dendritic spine. The protein localises to the postsynaptic cell membrane. It localises to the membrane. Functionally, plays an essential role in docking and fusion steps of regulated exocytosis. At the presynaptic level, RPH3A is recruited by RAB3A to the synaptic vesicle membrane in a GTP-dependent manner where it modulates synaptic vesicle trafficking and calcium-triggered neurotransmitter release. In the post-synaptic compartment, forms a ternary complex with GRIN2A and DLG4 and regulates NMDA receptor stability. Also plays a role in the exocytosis of arginine vasopressin hormone. The protein is Rabphilin-3A (RPH3A) of Bos taurus (Bovine).